A 306-amino-acid polypeptide reads, in one-letter code: Phosphatidylserine decarboxylase proenzyme (306 aa).

Active-site charge relay system; for autoendoproteolytic cleavage activity residues include Asp98, His155, and Ser259. The active-site Schiff-base intermediate with substrate; via pyruvic acid; for decarboxylase activity is Ser259. A Pyruvic acid (Ser); by autocatalysis modification is found at Ser259.

This sequence belongs to the phosphatidylserine decarboxylase family. PSD-B subfamily. Prokaryotic type I sub-subfamily. In terms of assembly, heterodimer of a large membrane-associated beta subunit and a small pyruvoyl-containing alpha subunit. It depends on pyruvate as a cofactor. Is synthesized initially as an inactive proenzyme. Formation of the active enzyme involves a self-maturation process in which the active site pyruvoyl group is generated from an internal serine residue via an autocatalytic post-translational modification. Two non-identical subunits are generated from the proenzyme in this reaction, and the pyruvate is formed at the N-terminus of the alpha chain, which is derived from the carboxyl end of the proenzyme. The autoendoproteolytic cleavage occurs by a canonical serine protease mechanism, in which the side chain hydroxyl group of the serine supplies its oxygen atom to form the C-terminus of the beta chain, while the remainder of the serine residue undergoes an oxidative deamination to produce ammonia and the pyruvoyl prosthetic group on the alpha chain. During this reaction, the Ser that is part of the protease active site of the proenzyme becomes the pyruvoyl prosthetic group, which constitutes an essential element of the active site of the mature decarboxylase.

It is found in the cell membrane. It catalyses the reaction a 1,2-diacyl-sn-glycero-3-phospho-L-serine + H(+) = a 1,2-diacyl-sn-glycero-3-phosphoethanolamine + CO2. The protein operates within phospholipid metabolism; phosphatidylethanolamine biosynthesis; phosphatidylethanolamine from CDP-diacylglycerol: step 2/2. In terms of biological role, catalyzes the formation of phosphatidylethanolamine (PtdEtn) from phosphatidylserine (PtdSer). The chain is Phosphatidylserine decarboxylase proenzyme from Nitrosococcus oceani (strain ATCC 19707 / BCRC 17464 / JCM 30415 / NCIMB 11848 / C-107).